We begin with the raw amino-acid sequence, 217 residues long: Monomethylamine corrinoid protein 2 (217 aa).

A B12-binding N-terminal domain is found at 1–91; it reads MTNTEIFEKL…ELEKSKVEGE (91 aa). Residues 93–217 form the B12-binding domain; the sequence is TGLAITFVAE…AAKVALNIMK (125 aa). His-106 provides a ligand contact to methylcob(III)alamin.

This sequence belongs to the methylamine corrinoid protein family. In terms of assembly, can form a complex with MtmB.

It functions in the pathway one-carbon metabolism; methanogenesis from methylamine. Its function is as follows. Acts as a methyl group carrier between MtmB and MtbA. In Methanosarcina acetivorans (strain ATCC 35395 / DSM 2834 / JCM 12185 / C2A), this protein is Monomethylamine corrinoid protein 2 (mtmC2).